We begin with the raw amino-acid sequence, 281 residues long: Phosphatidylglycerol--prolipoprotein diacylglyceryl transferase (281 aa).

Transmembrane regions (helical) follow at residues 23 to 43, 71 to 91, 107 to 127, and 133 to 153; these read IGPL…LFAW, FVIW…VLFY, WDGG…MILF, and ILVW…LGVV. Arg154 provides a ligand contact to a 1,2-diacyl-sn-glycero-3-phospho-(1'-sn-glycerol). A run of 3 helical transmembrane segments spans residues 189–209, 217–237, and 247–267; these read LYEA…LVWG, GFVA…VEFF, and LFGG…LLGL.

Belongs to the Lgt family.

Its subcellular location is the cell inner membrane. The catalysed reaction is L-cysteinyl-[prolipoprotein] + a 1,2-diacyl-sn-glycero-3-phospho-(1'-sn-glycerol) = an S-1,2-diacyl-sn-glyceryl-L-cysteinyl-[prolipoprotein] + sn-glycerol 1-phosphate + H(+). Its pathway is protein modification; lipoprotein biosynthesis (diacylglyceryl transfer). Catalyzes the transfer of the diacylglyceryl group from phosphatidylglycerol to the sulfhydryl group of the N-terminal cysteine of a prolipoprotein, the first step in the formation of mature lipoproteins. This chain is Phosphatidylglycerol--prolipoprotein diacylglyceryl transferase, found in Brucella canis (strain ATCC 23365 / NCTC 10854 / RM-666).